A 331-amino-acid polypeptide reads, in one-letter code: Adenosine deaminase (331 aa).

Zn(2+) is bound by residues His-12 and His-14. 2 residues coordinate substrate: His-14 and Asp-16. His-197 lines the Zn(2+) pocket. The Proton donor role is filled by Glu-200. Asp-278 is a binding site for Zn(2+).

Belongs to the metallo-dependent hydrolases superfamily. Adenosine and AMP deaminases family. Adenosine deaminase subfamily. Requires Zn(2+) as cofactor.

It carries out the reaction adenosine + H2O + H(+) = inosine + NH4(+). It catalyses the reaction 2'-deoxyadenosine + H2O + H(+) = 2'-deoxyinosine + NH4(+). In terms of biological role, catalyzes the hydrolytic deamination of adenosine and 2-deoxyadenosine. This Shewanella halifaxensis (strain HAW-EB4) protein is Adenosine deaminase.